A 227-amino-acid chain; its full sequence is ATP-dependent dethiobiotin synthetase BioD (227 aa).

13-18 (DIGKTY) contacts ATP. Thr17 is a Mg(2+) binding site. Lys38 is an active-site residue. Ser42 is a substrate binding site. ATP is bound by residues Asp55, 116-119 (EGSG), and 179-180 (NN). Mg(2+)-binding residues include Asp55 and Glu116.

Belongs to the dethiobiotin synthetase family. As to quaternary structure, homodimer. Mg(2+) serves as cofactor.

The protein localises to the cytoplasm. The enzyme catalyses (7R,8S)-7,8-diammoniononanoate + CO2 + ATP = (4R,5S)-dethiobiotin + ADP + phosphate + 3 H(+). It functions in the pathway cofactor biosynthesis; biotin biosynthesis; biotin from 7,8-diaminononanoate: step 1/2. Functionally, catalyzes a mechanistically unusual reaction, the ATP-dependent insertion of CO2 between the N7 and N8 nitrogen atoms of 7,8-diaminopelargonic acid (DAPA, also called 7,8-diammoniononanoate) to form a ureido ring. The sequence is that of ATP-dependent dethiobiotin synthetase BioD from Clostridium botulinum (strain Loch Maree / Type A3).